The chain runs to 266 residues: Translation initiation factor 2 subunit alpha (266 aa).

Residues 12-83 form the S1 motif domain; sequence GEILIATVKQ…RKGTVDVSLK (72 aa).

This sequence belongs to the eIF-2-alpha family. As to quaternary structure, heterotrimer composed of an alpha, a beta and a gamma chain.

In terms of biological role, eIF-2 functions in the early steps of protein synthesis by forming a ternary complex with GTP and initiator tRNA. This Saccharolobus islandicus (strain Y.N.15.51 / Yellowstone #2) (Sulfolobus islandicus) protein is Translation initiation factor 2 subunit alpha.